A 483-amino-acid chain; its full sequence is ATP synthase subunit beta (483 aa).

Residue 169–176 (GGAGVGKT) participates in ATP binding.

Belongs to the ATPase alpha/beta chains family. In terms of assembly, F-type ATPases have 2 components, CF(1) - the catalytic core - and CF(0) - the membrane proton channel. CF(1) has five subunits: alpha(3), beta(3), gamma(1), delta(1), epsilon(1). CF(0) has three main subunits: a(1), b(2) and c(9-12). The alpha and beta chains form an alternating ring which encloses part of the gamma chain. CF(1) is attached to CF(0) by a central stalk formed by the gamma and epsilon chains, while a peripheral stalk is formed by the delta and b chains.

Its subcellular location is the cell membrane. It catalyses the reaction ATP + H2O + 4 H(+)(in) = ADP + phosphate + 5 H(+)(out). Produces ATP from ADP in the presence of a proton gradient across the membrane. The catalytic sites are hosted primarily by the beta subunits. The sequence is that of ATP synthase subunit beta from Rhodococcus erythropolis (strain PR4 / NBRC 100887).